A 207-amino-acid chain; its full sequence is Ras-related protein Rab-7a (207 aa).

Thr-2 carries the post-translational modification N-acetylthreonine. Residues Ser-17, Gly-18, Val-19, Gly-20, Lys-21, Thr-22, Ser-23, Ser-34, Asn-35, Tyr-37, and Thr-40 each contribute to the GTP site. Thr-22 serves as a coordination point for Mg(2+). The Switch 1 motif lies at 28-41; that stretch reads YVNKKFSNQYKATI. Mg(2+)-binding residues include Thr-40 and Asp-63. Residue Gly-66 participates in GTP binding. Positions 67–82 match the Switch 2 motif; it reads QERFQSLGVAFYRGAD. Phosphoserine is present on Ser-72. GTP is bound by residues Asn-125, Lys-126, Asp-128, Ala-156, and Lys-157. Residues Lys-191 and Lys-194 each participate in a glycyl lysine isopeptide (Lys-Gly) (interchain with G-Cter in ubiquitin) cross-link. Residues Cys-205 and Cys-207 are each lipidated (S-geranylgeranyl cysteine). Residue Cys-207 is modified to Cysteine methyl ester.

The protein belongs to the small GTPase superfamily. Rab family. As to quaternary structure, interacts with NTRK1/TRKA. Interacts with RILP. Interacts with PSMA7. Interacts with RNF115. Interacts with and FYCO1. Interacts with the PIK3C3/VPS34-PIK3R4 complex. The GTP-bound form interacts with OSBPL1A. The GTP-bound form interacts with RAC1. Interacts with CLN3. Interacts with CHM, the substrate-binding subunit of the Rab geranylgeranyltransferase complex. Interacts with C9orf72. Does not interact with HPS4 and the BLOC-3 complex (heterodimer of HPS1 and HPS4). Interacts with CLN5. Interacts with PLEKHM1 (via N- and C-terminus). Interacts with PRPH; the interaction is direct. Interacts with VPS13A. The GDP-bound form interacts with RIMOC1. Interacts with the MON1A-CCZ1B complex and this interaction is enhanced in the presence of RIMOC1. Interacts with VPS39 and VPS41. Forms a ternary complex with LAMP2 and RUFY4; the interaction with LAMP2 is mediated by RUFY4 (via RUN and coiled coil domains). The cofactor is Mg(2+). In terms of processing, deubiquitination at Lys-191 and Lys-194 by USP32. Post-translationally, phosphorylated at Ser-72 by LRRK1; phosphorylation is dependent on protein kinase C (PKC) activation of LRRK1. Prenylated. Prenylation is required for association with cellular membranes. As to expression, expressed in osteoclasts and in neurons.

Its subcellular location is the cytoplasmic vesicle. The protein resides in the phagosome membrane. It localises to the late endosome membrane. The protein localises to the lysosome membrane. It is found in the melanosome membrane. Its subcellular location is the autophagosome membrane. The protein resides in the lipid droplet. It localises to the endosome membrane. The protein localises to the mitochondrion membrane. It carries out the reaction GTP + H2O = GDP + phosphate + H(+). Regulated by guanine nucleotide exchange factors (GEFs) which promote the exchange of bound GDP for free GTP. Regulated by GTPase activating proteins (GAPs) which increase the GTP hydrolysis activity. Inhibited by GDP dissociation inhibitors (GDIs). In terms of biological role, the small GTPases Rab are key regulators of intracellular membrane trafficking, from the formation of transport vesicles to their fusion with membranes. Rabs cycle between an inactive GDP-bound form and an active GTP-bound form that is able to recruit to membranes different sets of downstream effectors directly responsible for vesicle formation, movement, tethering and fusion. In its active state, RAB7A binds to a variety of effector proteins playing a key role in the regulation of endo-lysosomal trafficking. Governs early-to-late endosomal maturation, microtubule minus-end as well as plus-end directed endosomal migration and positioning, and endosome-lysosome transport through different protein-protein interaction cascades. Also plays a central role in growth-factor-mediated cell signaling, nutrient-transporter-mediated nutrient uptake, neurotrophin transport in the axons of neurons and lipid metabolism. Also involved in regulation of some specialized endosomal membrane trafficking, such as maturation of melanosomes, pathogen-induced phagosomes (or vacuoles) and autophagosomes. Plays a role in the maturation and acidification of phagosomes that engulf pathogens, such as S.aureus and Mycobacteria. Plays a role in the fusion of phagosomes with lysosomes. In concert with RAC1, plays a role in regulating the formation of RBs (ruffled borders) in osteoclasts. Controls the endosomal trafficking and neurite outgrowth signaling of NTRK1/TRKA. Regulates the endocytic trafficking of the EGF-EGFR complex by regulating its lysosomal degradation. Involved in the ADRB2-stimulated lipolysis through lipophagy, a cytosolic lipase-independent autophagic pathway. Required for the exosomal release of SDCBP, CD63 and syndecan. Required for vesicular trafficking and cell surface expression of ACE2. May play a role in PRPH neuronal intermediate filament assembly. The sequence is that of Ras-related protein Rab-7a from Rattus norvegicus (Rat).